A 358-amino-acid chain; its full sequence is Trace amine-associated receptor 7c (358 aa).

At 1–47 (MATDDDSFPWDQDSILSRDLLSASSLQLCYENLNRSCVRSPYSPGSR) the chain is on the extracellular side. The N-linked (GlcNAc...) asparagine glycan is linked to Asn-34. 2 disulfide bridges follow: Cys-37/Cys-201 and Cys-120/Cys-205. The helical transmembrane segment at 48–68 (LILYAVFGFGAVLAVCGNLLV) threads the bilayer. Over 69–83 (MTSILHFRQLHSPAN) the chain is Cytoplasmic. A helical transmembrane segment spans residues 84 to 104 (FLVASLACADLLVGLTVMPFS). Topologically, residues 105 to 125 (MVRSVEGCWYFGNTYCKFHSC) are extracellular. A helical membrane pass occupies residues 126 to 148 (FEGSFCYSSLFHLCFISLDRYIA). At 149 to 166 (VSDPLIYPTRFTASISGK) the chain is on the cytoplasmic side. Residues 167 to 187 (CITFSWLLSIIYSFSLLYTGA) form a helical membrane-spanning segment. Over 188 to 211 (NEAGLEDLVSALTCVGGCQVAVNQ) the chain is Extracellular. A helical transmembrane segment spans residues 212-232 (SWVFINFLLFLVPALVMMTVY). Residues 233-274 (SKIFLIAKQQAQNIEKMSKQTARASESYKDRVAKRERKAAKT) are Cytoplasmic-facing. A helical membrane pass occupies residues 275–295 (LGIAVAAFLLSWLPYFIDSII). Topologically, residues 296–309 (DAFLGFITPTYMYE) are extracellular. The chain crosses the membrane as a helical span at residues 310-332 (ILVWIVYYNSAMNPLIYAFFYPW). Topologically, residues 333–358 (FRKAIKLIVTGKILRENSSTINLFPE) are cytoplasmic.

The protein belongs to the G-protein coupled receptor 1 family.

The protein localises to the cell membrane. Functionally, olfactory receptor specific for N,N-dimethylalkylamines trace amines. Trace amine compounds are enriched in animal body fluids and act on trace amine-associated receptors (TAARs) to elicit both intraspecific and interspecific innate behaviors. Ligand-binding causes a conformation change that triggers signaling via G(s)-class of G alpha proteins (GNAL or GNAS). In Rattus norvegicus (Rat), this protein is Trace amine-associated receptor 7c.